The primary structure comprises 380 residues: tRNA (guanine(26)-N(2))-dimethyltransferase (380 aa).

The region spanning 2–374 (ITVNEGSVTI…AGIGEIEEVL (373 aa)) is the Trm1 methyltransferase domain. S-adenosyl-L-methionine contacts are provided by Arg-35, Arg-65, Asp-83, Asp-109, and Ala-110. The Zn(2+) site is built by Cys-242, Cys-245, Cys-261, and Cys-264.

The protein belongs to the class I-like SAM-binding methyltransferase superfamily. Trm1 family.

The enzyme catalyses guanosine(26) in tRNA + 2 S-adenosyl-L-methionine = N(2)-dimethylguanosine(26) in tRNA + 2 S-adenosyl-L-homocysteine + 2 H(+). Its function is as follows. Dimethylates a single guanine residue at position 26 of a number of tRNAs using S-adenosyl-L-methionine as donor of the methyl groups. This Methanothermobacter thermautotrophicus (strain ATCC 29096 / DSM 1053 / JCM 10044 / NBRC 100330 / Delta H) (Methanobacterium thermoautotrophicum) protein is tRNA (guanine(26)-N(2))-dimethyltransferase.